The sequence spans 320 residues: MAVQKYTMALFLAVALVAGPAAPTPPTPRTPPLLPPPRARDKATLTSRSVEDINAASRRPWWASVPPADKFKTFADHVLCVPNADVTSAATKAPQLKAKLDAAYRVAYEAAEGSTPEAKYDAFIAALTEALRVIAGAFEVHAVKPATEEVVADPVGELQIVDKIDAAFKIAATAANSAPANDKFTVFEGAFNKAIKESTAGAYETYKFIPSLEAAVKQAYGATVARAPEVKYAVFEAGLTKAITAMSEAQKVAKPPLSPQPPQVLPLAAGGAATVAAASDVRVCRSHGTLQDACLLRCRGGCQPVVWRGGSHRARGGYKV.

The N-terminal stretch at 1–23 (MAVQKYTMALFLAVALVAGPAAP) is a signal peptide. The segment at 21–45 (AAPTPPTPRTPPLLPPPRARDKATL) is disordered. Residues 22–37 (APTPPTPRTPPLLPPP) show a composition bias toward pro residues.

The protein belongs to the Poa p IX/Phl p VI allergen family.

The protein is Major pollen allergen Pha a 5.1 of Phalaris aquatica (Canary grass).